Consider the following 45-residue polypeptide: Protein PsbN (45 aa).

A helical membrane pass occupies residues 12-30 (FLSRSLVSFTGYALYTAFG).

This sequence belongs to the PsbN family.

Its subcellular location is the plastid. The protein localises to the chloroplast thylakoid membrane. Functionally, may play a role in photosystem I and II biogenesis. In Adiantum capillus-veneris (Maidenhair fern), this protein is Protein PsbN.